A 65-amino-acid polypeptide reads, in one-letter code: MRITEEGWAGEGKILVRYAIVEEIPGKLYHVVCPSLRFFEYCFDLNQCRKIALSLSEKVKDFLYV.

This is an uncharacterized protein from Saccharolobus islandicus (Sulfolobus islandicus).